Here is a 919-residue protein sequence, read N- to C-terminus: Protein phosphatase 1 regulatory subunit 37 (919 aa).

LRR repeat units follow at residues 340–361 (SLQY…FVAR), 368–388 (SLTV…MLLA), 396–417 (NLRE…AQLG), 425–445 (NIQI…AYVC), 454–474 (GLVT…GYLA), and 482–502 (SLET…HKLK). Disordered stretches follow at residues 626–716 (ATED…TIPS) and 790–866 (APSQ…APLP). A compositionally biased stretch (acidic residues) spans 631–640 (THEEEEEEEA). The segment covering 641 to 658 (SPLKKIEEETTDALKDAT) has biased composition (basic and acidic residues). Over residues 677 to 690 (PQDDSDSDTEDEET) the composition is skewed to acidic residues. Low complexity predominate over residues 691 to 701 (PTNTSLTSTSP). 2 stretches are compositionally biased toward polar residues: residues 791-801 (PSQTQNSTQPT) and 811-837 (DAQQ…LTES). The stretch at 833–861 (QLTESVSEEEQKKAETLNNEADINEDANT) forms a coiled coil.

The protein belongs to the PPP1R37 family.

In terms of biological role, may inhibit phosphatase activity of protein phosphatase 1 (PP1) complexes. The polypeptide is Protein phosphatase 1 regulatory subunit 37 (ppp1r37) (Danio rerio (Zebrafish)).